A 228-amino-acid polypeptide reads, in one-letter code: MQKLKQQVFEANMELPRYGLATFTWGNVSAIDRERGLVVIKPSGVAYETMKAADMVVVDMSGKVVEGEYRPSSDTATHLELYRRYPSLGGIVHTHSTHATAWAQAGLAIPALGTTHADYFFGDIPCTRGLSEEEVQGEYELNTGKVIIETLGNAEPLHTPGIVVYQHGPFAWGKDAHDAVHNAVVMEEVAKMAWIARSINPQLNHIDSFLMNKHFMRKHGPNAYYGQK.

Residues 26–27, 43–44, and 72–73 each bind substrate; these read GN, SG, and SS. Positions 74, 93, and 95 each coordinate Zn(2+). The active-site Proton donor/acceptor is aspartate 118. Residue histidine 167 participates in Zn(2+) binding. Tyrosine 225 (proton donor/acceptor) is an active-site residue.

It belongs to the aldolase class II family. AraD/FucA subfamily. Zn(2+) is required as a cofactor.

The enzyme catalyses L-ribulose 5-phosphate = D-xylulose 5-phosphate. The protein operates within cofactor degradation; L-ascorbate degradation; D-xylulose 5-phosphate from L-ascorbate: step 4/4. Functionally, catalyzes the isomerization of L-ribulose 5-phosphate to D-xylulose 5-phosphate. Is involved in the anaerobic L-ascorbate utilization. The chain is L-ribulose-5-phosphate 4-epimerase UlaF from Escherichia coli (strain ATCC 8739 / DSM 1576 / NBRC 3972 / NCIMB 8545 / WDCM 00012 / Crooks).